We begin with the raw amino-acid sequence, 239 residues long: Zwei Ig domain protein zig-7 (239 aa).

Residues 1–21 (MKLINCISIALLCTLVDFSSA) form the signal peptide. A glycan (N-linked (GlcNAc...) asparagine) is linked at Asn43. The Ig-like C2-type domain maps to 145–211 (PHVIGAERRG…TEDHIGKYRC (67 aa)). Cysteines 164 and 211 form a disulfide.

Expressed in body wall muscles.

Its subcellular location is the secreted. In terms of biological role, probably not involved in maintaining the position of ASI and ASH head neuron cell bodies and ventral nerve cord axons of PVQ, PVP, RMEV, AVK and HSN neurons. The protein is Zwei Ig domain protein zig-7 of Caenorhabditis elegans.